The chain runs to 621 residues: tRNA uridine 5-carboxymethylaminomethyl modification enzyme MnmG (621 aa).

8-13 lines the FAD pocket; sequence GAGHAG. A disordered region spans residues 199–227; the sequence is PRIDRRSVDYSRVEEQKGDENPPPFSFST. The segment covering 200 to 218 has biased composition (basic and acidic residues); sequence RIDRRSVDYSRVEEQKGDE. Residue 269–283 participates in NAD(+) binding; it reads GPRYCPSIEDKIFRF.

Belongs to the MnmG family. In terms of assembly, homodimer. Heterotetramer of two MnmE and two MnmG subunits. The cofactor is FAD.

The protein localises to the cytoplasm. Functionally, NAD-binding protein involved in the addition of a carboxymethylaminomethyl (cmnm) group at the wobble position (U34) of certain tRNAs, forming tRNA-cmnm(5)s(2)U34. The sequence is that of tRNA uridine 5-carboxymethylaminomethyl modification enzyme MnmG from Chlorobium luteolum (strain DSM 273 / BCRC 81028 / 2530) (Pelodictyon luteolum).